Reading from the N-terminus, the 104-residue chain is Complex III assembly factor LYRM7 (104 aa).

It belongs to the complex I LYR family. Interacts with UQCRFS1.

It is found in the mitochondrion matrix. Assembly factor required for Rieske Fe-S protein UQCRFS1 incorporation into the cytochrome b-c1 (CIII) complex. Functions as a chaperone, binding to this subunit within the mitochondrial matrix and stabilizing it prior to its translocation and insertion into the late CIII dimeric intermediate within the mitochondrial inner membrane. The chain is Complex III assembly factor LYRM7 (lyrm7) from Tetraodon nigroviridis (Spotted green pufferfish).